A 425-amino-acid chain; its full sequence is Phosphomethylpyrimidine synthase (425 aa).

Substrate-binding positions include Met-94, Tyr-123, His-162, 184-186 (SRG), 225-228 (NGMR), and Glu-264. His-268 serves as a coordination point for Zn(2+). Tyr-291 provides a ligand contact to substrate. His-332 lines the Zn(2+) pocket. Positions 407, 410, and 414 each coordinate [4Fe-4S] cluster.

Belongs to the ThiC family. Requires [4Fe-4S] cluster as cofactor.

The catalysed reaction is 5-amino-1-(5-phospho-beta-D-ribosyl)imidazole + S-adenosyl-L-methionine = 4-amino-2-methyl-5-(phosphooxymethyl)pyrimidine + CO + 5'-deoxyadenosine + formate + L-methionine + 3 H(+). It participates in cofactor biosynthesis; thiamine diphosphate biosynthesis. Its function is as follows. Catalyzes the synthesis of the hydroxymethylpyrimidine phosphate (HMP-P) moiety of thiamine from aminoimidazole ribotide (AIR) in a radical S-adenosyl-L-methionine (SAM)-dependent reaction. The polypeptide is Phosphomethylpyrimidine synthase (Methanocorpusculum labreanum (strain ATCC 43576 / DSM 4855 / Z)).